Here is a 372-residue protein sequence, read N- to C-terminus: Silphinene synthase peniA (372 aa).

D116, E121, N263, S267, and E271 together coordinate Mg(2+). The DDXXE motif motif lies at 116 to 121 (DDQFDE).

The protein belongs to the terpene synthase family. Requires Mg(2+) as cofactor.

It catalyses the reaction (2E,6E)-farnesyl diphosphate = silphinene + diphosphate. It participates in secondary metabolite biosynthesis; terpenoid biosynthesis. Functionally, sesquiterpene cyclase; part of the gene cluster that mediates the biosynthesis of penifulvin A, a potent insecticidal sesquiterpene that features a [5.5.5.6]dioxafenestrane ring. Within the pathway, peniA catalyzes the first step and generates the angular triquinane scaffold silphinene via cyclization of the linear farnesyl pyrophosphate (FPP). The cytochrome P450 monooxygenase peniB and the flavin-dependent monooxygenase peniC then catalyze a series of oxidation reactions to transform silphinene into penifulvin A. The chain is Silphinene synthase peniA from Penicillium patulum (Penicillium griseofulvum).